The chain runs to 252 residues: Reaction center protein L chain (252 aa).

The next 3 helical transmembrane spans lie at 8 to 30, 58 to 86, and 91 to 113; these read FFGVTAAFFIMLGTALIIWGAAL, GGLWQIITVCAIGAFGSWALREVEISRKL, and HVPAAFSVAIFAYVTLEVIRPLL. (7R,8Z)-bacteriochlorophyll b-binding residues include histidine 128 and histidine 148. The chain crosses the membrane as a helical span at residues 146 to 173; that stretch reads PMHMVAVTLFFTTTLALALHGSLVLAAI. Histidine 165 lines the Fe cation pocket. An a ubiquinone-binding site is contributed by phenylalanine 191. A helical membrane pass occupies residues 200–225; it reads GTLGIHRLGLFLALGAGFASATCILL. Histidine 205 contributes to the Fe cation binding site.

The protein belongs to the reaction center PufL/M/PsbA/D family. Reaction center is composed of four bacteriochlorophylls, two bacteriopheophytins, two ubiquinones, one iron, and two highly hydrophobic polypeptide chains (designated L and M).

The protein localises to the cell inner membrane. Functionally, the reaction center is a membrane-bound complex that mediates the initial photochemical event in the electron transfer process of photosynthesis. The protein is Reaction center protein L chain (pufL) of Acidiphilium cryptum.